A 245-amino-acid polypeptide reads, in one-letter code: Fibroblast growth factor 13 (245 aa).

The segment at 1-36 (MAAAIASSLIRQKRQAREREKSNACKCVSSPSKGKT) is disordered. Residues 1 to 62 (MAAAIASSLI…GSKKRRRRRP (62 aa)) are mediates targeting to the nucleus. The tract at residues 67–201 (KGIVTKLYSR…AHFLPKPLKV (135 aa)) is mediates interaction with sodium channels. S208 is subject to Phosphoserine. A disordered region spans residues 213–245 (TEFSRSGSGTPTKSRSVSGVLNGGKSMSHNEST). Positions 215 to 245 (FSRSGSGTPTKSRSVSGVLNGGKSMSHNEST) are enriched in polar residues.

It belongs to the heparin-binding growth factors family. In terms of assembly, interacts with SCN8A; regulates SCN8A activity. Interacts with SCN1A; may regulate SCN1A activity. Interacts with SCN5A; the interaction is direct and may regulate SNC5A density at membranes and function. May also interact with SCN2A and SCN11A. Interacts with MAPK8IP2; may regulate the MAPK8IP2 scaffolding activity. In terms of processing, may be phosphorylated. In terms of tissue distribution, ubiquitously expressed. Predominantly expressed in the nervous system.

The protein localises to the nucleus. It localises to the cytoplasm. It is found in the cell projection. The protein resides in the filopodium. Its subcellular location is the growth cone. The protein localises to the dendrite. It localises to the cell membrane. It is found in the sarcolemma. Its function is as follows. Microtubule-binding protein which directly binds tubulin and is involved in both polymerization and stabilization of microtubules. Through its action on microtubules, may participate in the refinement of axons by negatively regulating axonal and leading processes branching. Plays a crucial role in neuron polarization and migration in the cerebral cortex and the hippocampus. Regulates voltage-gated sodium channel transport and function. May also play a role in MAPK signaling. Required for the development of axonal initial segment-targeting inhibitory GABAergic synapses made by chandelier neurons. This chain is Fibroblast growth factor 13, found in Homo sapiens (Human).